A 235-amino-acid polypeptide reads, in one-letter code: Segregation and condensation protein A (235 aa).

It belongs to the ScpA family. As to quaternary structure, component of a cohesin-like complex composed of ScpA, ScpB and the Smc homodimer, in which ScpA and ScpB bind to the head domain of Smc. The presence of the three proteins is required for the association of the complex with DNA.

It localises to the cytoplasm. In terms of biological role, participates in chromosomal partition during cell division. May act via the formation of a condensin-like complex containing Smc and ScpB that pull DNA away from mid-cell into both cell halves. The polypeptide is Segregation and condensation protein A (Streptococcus mutans serotype c (strain ATCC 700610 / UA159)).